Consider the following 317-residue polypeptide: Apolipoprotein E (317 aa).

The N-terminal stretch at methionine 1–alanine 18 is a signal peptide. 8 repeat units span residues alanine 80 to threonine 101, proline 102 to glycine 123, alanine 124 to glycine 145, glutamine 146 to leucine 167, arginine 168 to glutamate 189, arginine 190 to alanine 211, threonine 212 to arginine 233, and alanine 234 to alanine 255. Positions alanine 80–alanine 255 are 8 X 22 AA approximate tandem repeats. A Methionine sulfoxide modification is found at methionine 143. Serine 147 bears the Phosphoserine mark. The tract at residues histidine 158 to arginine 168 is LDL and other lipoprotein receptors binding. Leucine 162 to arginine 165 lines the heparin pocket. The interval alanine 210–methionine 290 is lipid-binding and lipoprotein association. Residue glycine 229–methionine 236 coordinates heparin. The tract at residues glutamine 266 to histidine 317 is homooligomerization. Residues arginine 278–methionine 290 form a specificity for association with VLDL region.

This sequence belongs to the apolipoprotein A1/A4/E family. In terms of assembly, homotetramer. May interact with ABCA1; functionally associated with ABCA1 in the biogenesis of HDLs. May interact with APP/A4 amyloid-beta peptide; the interaction is extremely stable in vitro but its physiological significance is unclear. May interact with MAPT. May interact with MAP2. In the cerebrospinal fluid, interacts with secreted SORL1. Interacts with PMEL; this allows the loading of PMEL luminal fragment on ILVs to induce fibril nucleation. Post-translationally, APOE exists as multiple glycosylated and sialylated glycoforms within cells and in plasma. The extent of glycosylation and sialylation are tissue and context specific. In terms of processing, glycated in plasma VLDL. Phosphorylated by FAM20C in the extracellular medium.

It localises to the secreted. The protein resides in the extracellular space. It is found in the extracellular matrix. Its subcellular location is the extracellular vesicle. The protein localises to the endosome. It localises to the multivesicular body. Its function is as follows. APOE is an apolipoprotein, a protein associating with lipid particles, that mainly functions in lipoprotein-mediated lipid transport between organs via the plasma and interstitial fluids. APOE is a core component of plasma lipoproteins and is involved in their production, conversion and clearance. Apolipoproteins are amphipathic molecules that interact both with lipids of the lipoprotein particle core and the aqueous environment of the plasma. As such, APOE associates with chylomicrons, chylomicron remnants, very low density lipoproteins (VLDL) and intermediate density lipoproteins (IDL) but shows a preferential binding to high-density lipoproteins (HDL). It also binds a wide range of cellular receptors including the LDL receptor/LDLR, the LDL receptor-related proteins LRP1, LRP2 and LRP8 and the very low-density lipoprotein receptor/VLDLR that mediate the cellular uptake of the APOE-containing lipoprotein particles. Finally, APOE also has a heparin-binding activity and binds heparan-sulfate proteoglycans on the surface of cells, a property that supports the capture and the receptor-mediated uptake of APOE-containing lipoproteins by cells. A main function of APOE is to mediate lipoprotein clearance through the uptake of chylomicrons, VLDLs, and HDLs by hepatocytes. APOE is also involved in the biosynthesis by the liver of VLDLs as well as their uptake by peripheral tissues ensuring the delivery of triglycerides and energy storage in muscle, heart and adipose tissues. By participating in the lipoprotein-mediated distribution of lipids among tissues, APOE plays a critical role in plasma and tissues lipid homeostasis. APOE is also involved in two steps of reverse cholesterol transport, the HDLs-mediated transport of cholesterol from peripheral tissues to the liver, and thereby plays an important role in cholesterol homeostasis. First, it is functionally associated with ABCA1 in the biogenesis of HDLs in tissues. Second, it is enriched in circulating HDLs and mediates their uptake by hepatocytes. APOE also plays an important role in lipid transport in the central nervous system, regulating neuron survival and sprouting. This chain is Apolipoprotein E (APOE), found in Pan troglodytes (Chimpanzee).